The chain runs to 208 residues: Ribosomal RNA small subunit methyltransferase J (208 aa).

S-adenosyl-L-methionine contacts are provided by residues 54-55 (RD), 70-71 (ER), and aspartate 122.

The protein belongs to the methyltransferase superfamily. RsmJ family.

The protein localises to the cytoplasm. The enzyme catalyses guanosine(1516) in 16S rRNA + S-adenosyl-L-methionine = N(2)-methylguanosine(1516) in 16S rRNA + S-adenosyl-L-homocysteine + H(+). Functionally, specifically methylates the guanosine in position 1516 of 16S rRNA. The polypeptide is Ribosomal RNA small subunit methyltransferase J (Agrobacterium fabrum (strain C58 / ATCC 33970) (Agrobacterium tumefaciens (strain C58))).